The chain runs to 136 residues: Ribosome-binding factor A (136 aa).

Belongs to the RbfA family. As to quaternary structure, monomer. Binds 30S ribosomal subunits, but not 50S ribosomal subunits or 70S ribosomes.

Its subcellular location is the cytoplasm. Functionally, one of several proteins that assist in the late maturation steps of the functional core of the 30S ribosomal subunit. Associates with free 30S ribosomal subunits (but not with 30S subunits that are part of 70S ribosomes or polysomes). Required for efficient processing of 16S rRNA. May interact with the 5'-terminal helix region of 16S rRNA. This Yersinia pestis bv. Antiqua (strain Antiqua) protein is Ribosome-binding factor A.